A 292-amino-acid polypeptide reads, in one-letter code: Formamidopyrimidine-DNA glycosylase (292 aa).

Pro-2 (schiff-base intermediate with DNA) is an active-site residue. Catalysis depends on Glu-3, which acts as the Proton donor. Residue Lys-58 is the Proton donor; for beta-elimination activity of the active site. 3 residues coordinate DNA: His-103, Arg-122, and Lys-165. An FPG-type zinc finger spans residues 256–292 (RVYDRALHPCPTPGCKGEISRITQGGRSSFFCSMCQK). The active-site Proton donor; for delta-elimination activity is Arg-282.

It belongs to the FPG family. Monomer. Zn(2+) is required as a cofactor.

The enzyme catalyses Hydrolysis of DNA containing ring-opened 7-methylguanine residues, releasing 2,6-diamino-4-hydroxy-5-(N-methyl)formamidopyrimidine.. The catalysed reaction is 2'-deoxyribonucleotide-(2'-deoxyribose 5'-phosphate)-2'-deoxyribonucleotide-DNA = a 3'-end 2'-deoxyribonucleotide-(2,3-dehydro-2,3-deoxyribose 5'-phosphate)-DNA + a 5'-end 5'-phospho-2'-deoxyribonucleoside-DNA + H(+). Involved in base excision repair of DNA damaged by oxidation or by mutagenic agents. Acts as a DNA glycosylase that recognizes and removes damaged bases. Has a preference for oxidized purines, such as 7,8-dihydro-8-oxoguanine (8-oxoG). Has AP (apurinic/apyrimidinic) lyase activity and introduces nicks in the DNA strand. Cleaves the DNA backbone by beta-delta elimination to generate a single-strand break at the site of the removed base with both 3'- and 5'-phosphates. The chain is Formamidopyrimidine-DNA glycosylase from Methylocella silvestris (strain DSM 15510 / CIP 108128 / LMG 27833 / NCIMB 13906 / BL2).